A 141-amino-acid polypeptide reads, in one-letter code: MAGNILLEVVTPEKIVVSETVQTVTAPGSEGEFGVLVGHTPFLATLKLGTLNFKDETGKVRAVFINGGFAETLPNKVTVLAESAERRCDIDADRCRLALERAQQRLESKENAVDFERAKRALARAQTRMSLAESRKMDGFQ.

It belongs to the ATPase epsilon chain family. F-type ATPases have 2 components, CF(1) - the catalytic core - and CF(0) - the membrane proton channel. CF(1) has five subunits: alpha(3), beta(3), gamma(1), delta(1), epsilon(1). CF(0) has three main subunits: a, b and c.

The protein resides in the cell inner membrane. Its function is as follows. Produces ATP from ADP in the presence of a proton gradient across the membrane. The polypeptide is ATP synthase epsilon chain (Desulfatibacillum aliphaticivorans).